The following is a 151-amino-acid chain: Copper transporter 3 (151 aa).

The next 2 membrane-spanning stretches (helical) occupy residues L52 to L72 and Y103 to G123.

This sequence belongs to the copper transporter (Ctr) (TC 1.A.56) family. SLC31A subfamily. As to expression, highly expressed in stems and at lower levels in leaves and flowers.

It localises to the membrane. Functionally, involved in the transport of copper. The sequence is that of Copper transporter 3 (COPT3) from Arabidopsis thaliana (Mouse-ear cress).